Consider the following 434-residue polypeptide: Chaperone SurA (434 aa).

An N-terminal signal peptide occupies residues 1 to 22; sequence MKPSKHLIFALFALAISQPTMA. PpiC domains follow at residues 173–274 and 283–383; these read DVEY…KIMD and IEEV…QLEE.

Its subcellular location is the periplasm. The enzyme catalyses [protein]-peptidylproline (omega=180) = [protein]-peptidylproline (omega=0). Its function is as follows. Chaperone involved in the correct folding and assembly of outer membrane proteins. Recognizes specific patterns of aromatic residues and the orientation of their side chains, which are found more frequently in integral outer membrane proteins. May act in both early periplasmic and late outer membrane-associated steps of protein maturation. In Shewanella oneidensis (strain ATCC 700550 / JCM 31522 / CIP 106686 / LMG 19005 / NCIMB 14063 / MR-1), this protein is Chaperone SurA.